The sequence spans 575 residues: Flagellin B (575 aa).

Belongs to the bacterial flagellin family. Heteromer of flaA and flaB.

It localises to the secreted. The protein localises to the bacterial flagellum. Its function is as follows. Flagellin is the subunit protein which polymerizes to form the filaments of bacterial flagella. This is Flagellin B (flaB) from Campylobacter jejuni.